Reading from the N-terminus, the 433-residue chain is Ribulose bisphosphate carboxylase/oxygenase activase, chloroplastic (433 aa).

Positions 1–20 (MAAAFSSTVGAPASTPTRSS) are enriched in polar residues. The transit peptide at 1–53 (MAAAFSSTVGAPASTPTRSSFLGKKLNKPQVSAAVTYHGKSSSSNSRFKAMAA) directs the protein to the chloroplast. The tract at residues 1 to 60 (MAAAFSSTVGAPASTPTRSSFLGKKLNKPQVSAAVTYHGKSSSSNSRFKAMAAKEVDETK) is disordered. ATP is bound at residue 161–168 (GGKGQGKS).

Belongs to the RuBisCO activase family.

Its subcellular location is the plastid. It localises to the chloroplast stroma. Its function is as follows. Activation of RuBisCO (ribulose-1,5-bisphosphate carboxylase/oxygenase; EC 4.1.1.39) involves the ATP-dependent carboxylation of the epsilon-amino group of lysine leading to a carbamate structure. The chain is Ribulose bisphosphate carboxylase/oxygenase activase, chloroplastic (RCA1) from Zea mays (Maize).